Reading from the N-terminus, the 106-residue chain is Flagellar transcriptional regulator FlhD (106 aa).

The protein belongs to the FlhD family. Homodimer; disulfide-linked. Forms a heterohexamer composed of two FlhC and four FlhD subunits. Each FlhC binds a FlhD dimer, forming a heterotrimer, and a hexamer assembles by dimerization of two heterotrimers.

It localises to the cytoplasm. In terms of biological role, functions in complex with FlhC as a master transcriptional regulator that regulates transcription of several flagellar and non-flagellar operons by binding to their promoter region. Activates expression of class 2 flagellar genes, including fliA, which is a flagellum-specific sigma factor that turns on the class 3 genes. Also regulates genes whose products function in a variety of physiological pathways. This Burkholderia pseudomallei (strain 1710b) protein is Flagellar transcriptional regulator FlhD.